We begin with the raw amino-acid sequence, 547 residues long: Glucose-6-phosphate isomerase (547 aa).

Catalysis depends on glutamate 351, which acts as the Proton donor. Catalysis depends on residues histidine 382 and lysine 510.

Belongs to the GPI family.

Its subcellular location is the cytoplasm. The enzyme catalyses alpha-D-glucose 6-phosphate = beta-D-fructose 6-phosphate. Its pathway is carbohydrate biosynthesis; gluconeogenesis. It participates in carbohydrate degradation; glycolysis; D-glyceraldehyde 3-phosphate and glycerone phosphate from D-glucose: step 2/4. Functionally, catalyzes the reversible isomerization of glucose-6-phosphate to fructose-6-phosphate. The sequence is that of Glucose-6-phosphate isomerase from Beijerinckia indica subsp. indica (strain ATCC 9039 / DSM 1715 / NCIMB 8712).